The primary structure comprises 278 residues: HTH-type transcriptional activator RhaS (278 aa).

The HTH araC/xylS-type domain maps to 174-272 (NLLLAWLEDH…NWSPRDIRQG (99 aa)). 2 DNA-binding regions (H-T-H motif) span residues 191 to 212 (DAVA…KQQT) and 239 to 262 (VTDI…RREF).

In terms of assembly, binds DNA as a dimer.

Its subcellular location is the cytoplasm. Activates expression of the rhaBAD and rhaT operons. In Shigella dysenteriae serotype 1 (strain Sd197), this protein is HTH-type transcriptional activator RhaS.